Here is a 185-residue protein sequence, read N- to C-terminus: Elongation factor P (185 aa).

The protein belongs to the elongation factor P family.

The protein resides in the cytoplasm. It participates in protein biosynthesis; polypeptide chain elongation. Involved in peptide bond synthesis. Stimulates efficient translation and peptide-bond synthesis on native or reconstituted 70S ribosomes in vitro. Probably functions indirectly by altering the affinity of the ribosome for aminoacyl-tRNA, thus increasing their reactivity as acceptors for peptidyl transferase. The sequence is that of Elongation factor P from Staphylococcus aureus (strain Mu3 / ATCC 700698).